A 225-amino-acid chain; its full sequence is Golgi to ER traffic protein 1 (225 aa).

Position 1 (Met-1) is a topological domain, lumenal. A helical membrane pass occupies residues 2-21 (NWVIIAALFFVIINKLLQYT). Topologically, residues 22–107 (SRYQEAWINK…SQSKLFNRLK (86 aa)) are cytoplasmic. A coiled-coil region spans residues 37-104 (DISSLSKEYS…AKDSQSKLFN (68 aa)). The helical transmembrane segment at 108–128 (LLTLTLPFMILKLWKGKFIVY) threads the bilayer. At 129-172 (DIPTKDTFPVIVNGVLSQGLLYIPLLPINFLRGIDPNKHILVPG) the chain is on the lumenal side. The chain crosses the membrane as a helical span at residues 173 to 189 (VSLGIWLMALTKTIDTV). The Cytoplasmic segment spans residues 190 to 225 (EFIVKQLVFQPVVSKQVKEKTKEKVVELKTTEAELD).

This sequence belongs to the WRB/GET1 family. In terms of assembly, component of the Golgi to ER traffic (GET) complex, which is composed of GET1, GET2 and GET3. Within the complex, GET1 and GET2 form a heterotetramer which is stabilized by phosphatidylinositol binding and which binds to the GET3 homodimer.

The protein resides in the endoplasmic reticulum membrane. Its subcellular location is the golgi apparatus membrane. Required for the post-translational delivery of tail-anchored (TA) proteins to the endoplasmic reticulum. Together with GET2, acts as a membrane receptor for soluble GET3, which recognizes and selectively binds the transmembrane domain of TA proteins in the cytosol. The GET complex cooperates with the HDEL receptor ERD2 to mediate the ATP-dependent retrieval of resident ER proteins that contain a C-terminal H-D-E-L retention signal from the Golgi to the ER. In Vanderwaltozyma polyspora (strain ATCC 22028 / DSM 70294 / BCRC 21397 / CBS 2163 / NBRC 10782 / NRRL Y-8283 / UCD 57-17) (Kluyveromyces polysporus), this protein is Golgi to ER traffic protein 1.